A 159-amino-acid chain; its full sequence is Crossover junction endodeoxyribonuclease RuvC (159 aa).

Active-site residues include D7, E67, and D139. Residues D7, E67, and D139 each coordinate Mg(2+).

Belongs to the RuvC family. As to quaternary structure, homodimer which binds Holliday junction (HJ) DNA. The HJ becomes 2-fold symmetrical on binding to RuvC with unstacked arms; it has a different conformation from HJ DNA in complex with RuvA. In the full resolvosome a probable DNA-RuvA(4)-RuvB(12)-RuvC(2) complex forms which resolves the HJ. Mg(2+) is required as a cofactor.

It localises to the cytoplasm. The enzyme catalyses Endonucleolytic cleavage at a junction such as a reciprocal single-stranded crossover between two homologous DNA duplexes (Holliday junction).. In terms of biological role, the RuvA-RuvB-RuvC complex processes Holliday junction (HJ) DNA during genetic recombination and DNA repair. Endonuclease that resolves HJ intermediates. Cleaves cruciform DNA by making single-stranded nicks across the HJ at symmetrical positions within the homologous arms, yielding a 5'-phosphate and a 3'-hydroxyl group; requires a central core of homology in the junction. The consensus cleavage sequence is 5'-(A/T)TT(C/G)-3'. Cleavage occurs on the 3'-side of the TT dinucleotide at the point of strand exchange. HJ branch migration catalyzed by RuvA-RuvB allows RuvC to scan DNA until it finds its consensus sequence, where it cleaves and resolves the cruciform DNA. The polypeptide is Crossover junction endodeoxyribonuclease RuvC (Thermosynechococcus vestitus (strain NIES-2133 / IAM M-273 / BP-1)).